The chain runs to 83 residues: Large ribosomal subunit protein bL31B (83 aa).

Belongs to the bacterial ribosomal protein bL31 family. Type B subfamily. In terms of assembly, part of the 50S ribosomal subunit.

This Tropheryma whipplei (strain TW08/27) (Whipple's bacillus) protein is Large ribosomal subunit protein bL31B.